Consider the following 950-residue polypeptide: Bifunctional glutamine synthetase adenylyltransferase/adenylyl-removing enzyme (950 aa).

The interval M1 to A440 is adenylyl removase. An adenylyl transferase region spans residues H449–V950.

Belongs to the GlnE family. Mg(2+) serves as cofactor.

It carries out the reaction [glutamine synthetase]-O(4)-(5'-adenylyl)-L-tyrosine + phosphate = [glutamine synthetase]-L-tyrosine + ADP. It catalyses the reaction [glutamine synthetase]-L-tyrosine + ATP = [glutamine synthetase]-O(4)-(5'-adenylyl)-L-tyrosine + diphosphate. Its function is as follows. Involved in the regulation of glutamine synthetase GlnA, a key enzyme in the process to assimilate ammonia. When cellular nitrogen levels are high, the C-terminal adenylyl transferase (AT) inactivates GlnA by covalent transfer of an adenylyl group from ATP to specific tyrosine residue of GlnA, thus reducing its activity. Conversely, when nitrogen levels are low, the N-terminal adenylyl removase (AR) activates GlnA by removing the adenylyl group by phosphorolysis, increasing its activity. The regulatory region of GlnE binds the signal transduction protein PII (GlnB) which indicates the nitrogen status of the cell. The polypeptide is Bifunctional glutamine synthetase adenylyltransferase/adenylyl-removing enzyme (Yersinia enterocolitica serotype O:8 / biotype 1B (strain NCTC 13174 / 8081)).